The primary structure comprises 1295 residues: Protein FORGETTER 1 (1295 aa).

Pro residues-rich tracts occupy residues methionine 1 to alanine 14, proline 75 to isoleucine 89, and proline 162 to glutamate 177. Disordered regions lie at residues methionine 1 to alanine 20, arginine 68 to glycine 107, leucine 153 to arginine 204, and proline 626 to aspartate 688. Positions glutamate 178–glycine 193 are enriched in acidic residues. A Nuclear localization signal motif is present at residues arginine 643 to proline 650. Residues aspartate 669–aspartate 688 are compositionally biased toward acidic residues. The PHD-type zinc finger occupies phenylalanine 691–lysine 741.

Belongs to the SBNO family. In terms of assembly, interacts with SWI/SNF and ISWI chromatin remodelers such as BRM, CHR11 and CHR17. Binds to histone H3.

It localises to the nucleus. Functionally, required for normal embryo development. Necessary to acquire heat stress (HS) memory, by modulating nucleosome occupancy and regulating heat-induced gene expression. Associates globally with the nucleosome-poor regions flanking the transcription units of expressed genes. Binds to the promoter regions, primarily to the proximal promoter just upstream of the transcriptional start sites (TSS) and somewhat more weakly to the region downstream of the transcription termination site (TTS), of actively expressed genes (e.g. HSA32, HSP18.2 and HSP22.0) in a heat-dependent fashion. This is Protein FORGETTER 1 from Arabidopsis thaliana (Mouse-ear cress).